The primary structure comprises 292 residues: Hydroxysqualene synthase (292 aa).

This sequence belongs to the phytoene/squalene synthase family. HpnC subfamily.

It carries out the reaction presqualene diphosphate + H2O = hydroxysqualene + diphosphate. It participates in secondary metabolite biosynthesis; hopanoid biosynthesis. Its function is as follows. Involved in the biosynthesis of the hopanoid precursor squalene (SQ) from farnesyl diphosphate (FPP). Catalyzes the second step, the conversion of presqualene diphosphate (PSPP) to hydroxysqualene (HSQ). This Sinorhizobium fredii (strain NBRC 101917 / NGR234) protein is Hydroxysqualene synthase.